The chain runs to 130 residues: RutC family protein slr0709 (130 aa).

This sequence belongs to the RutC family.

In Synechocystis sp. (strain ATCC 27184 / PCC 6803 / Kazusa), this protein is RutC family protein slr0709.